Consider the following 173-residue polypeptide: Large ribosomal subunit protein uL10 (173 aa).

This sequence belongs to the universal ribosomal protein uL10 family. As to quaternary structure, part of the ribosomal stalk of the 50S ribosomal subunit. The N-terminus interacts with L11 and the large rRNA to form the base of the stalk. The C-terminus forms an elongated spine to which L12 dimers bind in a sequential fashion forming a multimeric L10(L12)X complex.

Forms part of the ribosomal stalk, playing a central role in the interaction of the ribosome with GTP-bound translation factors. In Bifidobacterium adolescentis (strain ATCC 15703 / DSM 20083 / NCTC 11814 / E194a), this protein is Large ribosomal subunit protein uL10.